Here is a 153-residue protein sequence, read N- to C-terminus: Transcriptional repressor NrdR (153 aa).

A zinc finger lies at 3–34; it reads CPFCAHDDSQVKDSRPAEDNAAIRRRRQCSKC. An ATP-cone domain is found at 49–139; the sequence is VTVVKSDDKR…VYRDFSEARD (91 aa).

It belongs to the NrdR family. Zn(2+) serves as cofactor.

Functionally, negatively regulates transcription of bacterial ribonucleotide reductase nrd genes and operons by binding to NrdR-boxes. In Erythrobacter litoralis (strain HTCC2594), this protein is Transcriptional repressor NrdR.